Here is a 170-residue protein sequence, read N- to C-terminus: MDDVNSIVLAAGQAAEEGGTNNFLVPNGTFFFVLAIFLVVLAVIGTFVVPPILKVLRERDAMVAMTLADNKKSAEQFAAAQADYEKAMAEARVQASSYRHNARAEGRKVVEDARAHAEQEVASTLQQANEQLKRERDAVELDLRANVGAMSATLANRIVGVDVTTPAAAG.

A helical transmembrane segment spans residues 30 to 50 (FFFVLAIFLVVLAVIGTFVVP).

The protein belongs to the ATPase B chain family. F-type ATPases have 2 components, F(1) - the catalytic core - and F(0) - the membrane proton channel. F(1) has five subunits: alpha(3), beta(3), gamma(1), delta(1), epsilon(1). F(0) has three main subunits: a(1), b(2) and c(10-14). The alpha and beta chains form an alternating ring which encloses part of the gamma chain. F(1) is attached to F(0) by a central stalk formed by the gamma and epsilon chains, while a peripheral stalk is formed by the delta and b chains.

It is found in the cell membrane. Functionally, f(1)F(0) ATP synthase produces ATP from ADP in the presence of a proton or sodium gradient. F-type ATPases consist of two structural domains, F(1) containing the extramembraneous catalytic core and F(0) containing the membrane proton channel, linked together by a central stalk and a peripheral stalk. During catalysis, ATP synthesis in the catalytic domain of F(1) is coupled via a rotary mechanism of the central stalk subunits to proton translocation. In terms of biological role, component of the F(0) channel, it forms part of the peripheral stalk, linking F(1) to F(0). This Mycobacterium ulcerans (strain Agy99) protein is ATP synthase subunit b.